Consider the following 240-residue polypeptide: 3-deoxy-D-manno-octulosonic acid kinase (240 aa).

The active site involves Asp170.

It belongs to the protein kinase superfamily. KdkA/RfaP family.

It is found in the cell inner membrane. It carries out the reaction an alpha-Kdo-(2-&gt;6)-lipid IVA + ATP = a 4-O-phospho-alpha-Kdo-(2-&gt;6)-lipid IVA + ADP + H(+). It participates in bacterial outer membrane biogenesis; LPS core biosynthesis. In terms of biological role, catalyzes the ATP-dependent phosphorylation of the 3-deoxy-D-manno-octulosonic acid (Kdo) residue in Kdo-lipid IV(A) at the 4-OH position. In Mannheimia succiniciproducens (strain KCTC 0769BP / MBEL55E), this protein is 3-deoxy-D-manno-octulosonic acid kinase.